The sequence spans 279 residues: Urease accessory protein UreD (279 aa).

Belongs to the UreD family. UreD, UreF and UreG form a complex that acts as a GTP-hydrolysis-dependent molecular chaperone, activating the urease apoprotein by helping to assemble the nickel containing metallocenter of UreC. The UreE protein probably delivers the nickel.

It localises to the cytoplasm. Required for maturation of urease via the functional incorporation of the urease nickel metallocenter. In Pseudomonas fluorescens (strain ATCC BAA-477 / NRRL B-23932 / Pf-5), this protein is Urease accessory protein UreD.